A 331-amino-acid chain; its full sequence is Putative lipoprotein YerB (331 aa).

An N-terminal signal peptide occupies residues 1–19 (MKKWMTVCALCFVFFLLVS). Residue C20 is the site of N-palmitoyl cysteine attachment. C20 carries S-diacylglycerol cysteine lipidation. Position 97 is a phosphothreonine (T97). S103 bears the Phosphoserine mark.

In terms of assembly, interacts with PcrA. The interaction is not essential for cell viability or repair of UV-induced lesions.

The protein resides in the cell membrane. In Bacillus subtilis (strain 168), this protein is Putative lipoprotein YerB (yerB).